A 156-amino-acid polypeptide reads, in one-letter code: MAETNEKQAAHPEFRMQKMYTKDLSFESPSAPAVFLDGGSEPKVELNLQLNNKKVDDDHWEVSLEINAKVTADDGAKTLFILELEHAAIFWVRNIPEEHLAMVLAVDCPTLLFPFTRQIASQVSVDGGFAPFLMEPVNFMALFQGAKKQEQEQTAN.

The protein belongs to the SecB family. As to quaternary structure, homotetramer, a dimer of dimers. One homotetramer interacts with 1 SecA dimer.

It localises to the cytoplasm. Its function is as follows. One of the proteins required for the normal export of preproteins out of the cell cytoplasm. It is a molecular chaperone that binds to a subset of precursor proteins, maintaining them in a translocation-competent state. It also specifically binds to its receptor SecA. This chain is Protein-export protein SecB, found in Desulfotalea psychrophila (strain LSv54 / DSM 12343).